Here is a 252-residue protein sequence, read N- to C-terminus: Carboxy-S-adenosyl-L-methionine synthase (252 aa).

S-adenosyl-L-methionine is bound by residues Tyr45, 70–72 (GCS), 95–96 (DN), 127–128 (DI), Asn142, and Arg209.

This sequence belongs to the class I-like SAM-binding methyltransferase superfamily. Cx-SAM synthase family. As to quaternary structure, homodimer.

It catalyses the reaction prephenate + S-adenosyl-L-methionine = carboxy-S-adenosyl-L-methionine + 3-phenylpyruvate + H2O. Functionally, catalyzes the conversion of S-adenosyl-L-methionine (SAM) to carboxy-S-adenosyl-L-methionine (Cx-SAM). The protein is Carboxy-S-adenosyl-L-methionine synthase of Pseudomonas paraeruginosa (strain DSM 24068 / PA7) (Pseudomonas aeruginosa (strain PA7)).